The sequence spans 261 residues: Uridine-cytidine kinase 2 (261 aa).

Residues 1–16 (MAGDSEQTLQNHQQPN) are compositionally biased toward polar residues. Positions 1 to 24 (MAGDSEQTLQNHQQPNGGEPFLIG) are disordered. Ala2 is modified (N-acetylalanine). 27 to 35 (GGTASGKSS) is a binding site for ATP. Residues Asp84, Tyr112, His117, Arg166, Arg176, and Gln184 each contribute to the substrate site. Asp213 provides a ligand contact to ATP. Residues 240–261 (GYLNGYTPSRKRQASESSSRPH) are disordered. Position 254 is a phosphoserine (Ser254).

The protein belongs to the uridine kinase family. Homotetramer.

It carries out the reaction uridine + ATP = UMP + ADP + H(+). The enzyme catalyses cytidine + ATP = CMP + ADP + H(+). It functions in the pathway pyrimidine metabolism; CTP biosynthesis via salvage pathway; CTP from cytidine: step 1/3. It participates in pyrimidine metabolism; UMP biosynthesis via salvage pathway; UMP from uridine: step 1/1. Phosphorylates uridine and cytidine to uridine monophosphate and cytidine monophosphate. Does not phosphorylate deoxyribonucleosides or purine ribonucleosides. Can use ATP or GTP as a phosphate donor. The polypeptide is Uridine-cytidine kinase 2 (Uck2) (Mus musculus (Mouse)).